The chain runs to 476 residues: Glycogen synthase (476 aa).

K15 serves as a coordination point for ADP-alpha-D-glucose.

This sequence belongs to the glycosyltransferase 1 family. Bacterial/plant glycogen synthase subfamily.

It carries out the reaction [(1-&gt;4)-alpha-D-glucosyl](n) + ADP-alpha-D-glucose = [(1-&gt;4)-alpha-D-glucosyl](n+1) + ADP + H(+). It participates in glycan biosynthesis; glycogen biosynthesis. Its function is as follows. Synthesizes alpha-1,4-glucan chains using ADP-glucose. The protein is Glycogen synthase of Leptospira biflexa serovar Patoc (strain Patoc 1 / Ames).